A 492-amino-acid chain; its full sequence is Putative protein disulfide-isomerase C1F5.02 (492 aa).

The signal sequence occupies residues Met1–Ala22. Positions Glu23–Leu128 constitute a Thioredoxin 1 domain. Active-site nucleophile residues include Cys51 and Cys54. The cysteines at positions 51 and 54 are disulfide-linked. 2 N-linked (GlcNAc...) asparagine glycosylation sites follow: Asn161 and Asn257. Residues Glu323–Ser462 form the Thioredoxin 2 domain. Residues Cys385 and Cys388 each act as nucleophile in the active site. Residues Cys385 and Cys388 are joined by a disulfide bond. Positions Lys468–Leu492 are disordered. Acidic residues predominate over residues Asp477–Leu492. The short motif at Ala489–Leu492 is the Prevents secretion from ER element.

Belongs to the protein disulfide isomerase family.

The protein resides in the endoplasmic reticulum lumen. It catalyses the reaction Catalyzes the rearrangement of -S-S- bonds in proteins.. Functionally, participates in the folding of proteins containing disulfide bonds, may be involved in glycosylation, prolyl hydroxylation and triglyceride transfer. The sequence is that of Putative protein disulfide-isomerase C1F5.02 from Schizosaccharomyces pombe (strain 972 / ATCC 24843) (Fission yeast).